The primary structure comprises 69 residues: DNA gyrase inhibitor YacG (69 aa).

Positions 7, 10, 26, and 30 each coordinate Zn(2+).

This sequence belongs to the DNA gyrase inhibitor YacG family. In terms of assembly, interacts with GyrB. Zn(2+) is required as a cofactor.

In terms of biological role, inhibits all the catalytic activities of DNA gyrase by preventing its interaction with DNA. Acts by binding directly to the C-terminal domain of GyrB, which probably disrupts DNA binding by the gyrase. The polypeptide is DNA gyrase inhibitor YacG (Shewanella baltica (strain OS195)).